A 271-amino-acid chain; its full sequence is Phosphoglycerate mutase-like protein (271 aa).

His-22 (tele-phosphohistidine intermediate) is an active-site residue. The Proton donor/acceptor role is filled by Glu-134. The interval Ser-252–Gly-271 is disordered.

Belongs to the phosphoglycerate mutase family. Expressed in the shoot apical meristem and meristematic zone of the root tips.

Functionally, may play a role in carbohydrates metabolism. In Arabidopsis thaliana (Mouse-ear cress), this protein is Phosphoglycerate mutase-like protein.